We begin with the raw amino-acid sequence, 152 residues long: Large ribosomal subunit protein bL9 (152 aa).

This sequence belongs to the bacterial ribosomal protein bL9 family.

Its function is as follows. Binds to the 23S rRNA. The sequence is that of Large ribosomal subunit protein bL9 from Picosynechococcus sp. (strain ATCC 27264 / PCC 7002 / PR-6) (Agmenellum quadruplicatum).